An 82-amino-acid polypeptide reads, in one-letter code: Small ribosomal subunit protein bS18 (82 aa).

Residues methionine 1–cysteine 20 are disordered.

This sequence belongs to the bacterial ribosomal protein bS18 family. In terms of assembly, part of the 30S ribosomal subunit. Forms a tight heterodimer with protein bS6.

In terms of biological role, binds as a heterodimer with protein bS6 to the central domain of the 16S rRNA, where it helps stabilize the platform of the 30S subunit. The chain is Small ribosomal subunit protein bS18 from Allorhizobium ampelinum (strain ATCC BAA-846 / DSM 112012 / S4) (Agrobacterium vitis (strain S4)).